Consider the following 397-residue polypeptide: Geranylgeranyl pyrophosphate synthase AN1592 (397 aa).

A disordered region spans residues 1-67 (MSPPLDSALE…SHDSSASSNI (67 aa)). Basic and acidic residues predominate over residues 13-42 (SEYKETAFPRTEKDPSQYKEHDLVTPEKEI). Residues 52–67 (SHSSHGSHDSSASSNI) are compositionally biased toward low complexity. Residues K120, R123, and H152 each contribute to the isopentenyl diphosphate site. Residues D159 and D163 each coordinate Mg(2+). R168 serves as a coordination point for dimethylallyl diphosphate. An isopentenyl diphosphate-binding site is contributed by R169. K247, T248, and Q281 together coordinate dimethylallyl diphosphate. A Mg(2+)-binding site is contributed by D284. Positions 288, 298, and 308 each coordinate dimethylallyl diphosphate.

This sequence belongs to the FPP/GGPP synthase family. It depends on Mg(2+) as a cofactor.

The enzyme catalyses isopentenyl diphosphate + dimethylallyl diphosphate = (2E)-geranyl diphosphate + diphosphate. It carries out the reaction isopentenyl diphosphate + (2E)-geranyl diphosphate = (2E,6E)-farnesyl diphosphate + diphosphate. It catalyses the reaction isopentenyl diphosphate + (2E,6E)-farnesyl diphosphate = (2E,6E,10E)-geranylgeranyl diphosphate + diphosphate. It participates in secondary metabolite biosynthesis; terpenoid biosynthesis. Geranylgeranyl pyrophosphate synthase; part of the gene cluster that mediates the biosynthesis of the diterpene ent-pimara-8(14),15-diene (PD). Within the cluster, the HMG-CoA reductase AN1593 functions in the mevalonate pathway, which produces isoprenoid precursors. The geranylgeranyl pyrophosphate (GGPP) synthase AN1592 is needed in the formation of GGPP, the precursor for diterpenes. Lastly, the pimaradiene synthase pbcA performs the 2 cyclization steps that convert GGPP to ent-pimara-8(14),15-diene. The putative roles of the remaining cluster enzymes in ent-pimara-8(14),15-diene biosynthesis is unclear. The cytochrome P450 monooxygenase AN1598, the glutathione S-transferase AN1595, the oxidoreductases AN1596 and AN1597 probably function as decorative enzymes. It is possible that in biological conditions the compound is oxidized to ent-pimara-8(14),15-dien-19-oic acid, which is a bioactive diterpene compound predominant in many plant extracts. The polypeptide is Geranylgeranyl pyrophosphate synthase AN1592 (Emericella nidulans (strain FGSC A4 / ATCC 38163 / CBS 112.46 / NRRL 194 / M139) (Aspergillus nidulans)).